Consider the following 681-residue polypeptide: Peroxisomal acyl-coenzyme A oxidase 2 (681 aa).

Residue Ser9 is modified to Phosphoserine. Lys66, Lys137, Lys453, Lys561, and Lys667 each carry N6-succinyllysine. Residues 679–681 carry the Microbody targeting signal motif; sequence SNL.

Belongs to the acyl-CoA oxidase family. In terms of assembly, homodimer. The cofactor is FAD. As to expression, liver and kidney.

The protein localises to the peroxisome. It carries out the reaction (25R)-3alpha,7alpha,12alpha-trihydroxy-5beta-cholestan-26-oyl-CoA + A + H2O = (24R,25R)-3alpha,7alpha,12alpha,24-tetrahydroxy-5beta-cholestan-26-oyl-CoA + AH2. The enzyme catalyses (25S)-3alpha,7alpha,12alpha-trihydroxy-5beta-cholestan-26-oyl-CoA + O2 = (24E)-3alpha,7alpha,12alpha-trihydroxy-5beta-cholest-24-en-26-oyl-CoA + H2O2. Oxidizes the CoA esters of the bile acid intermediates di- and tri-hydroxycholestanoic acids. Capable of oxidizing short as well as long chain 2-methyl branched fatty acids. The protein is Peroxisomal acyl-coenzyme A oxidase 2 of Oryctolagus cuniculus (Rabbit).